A 187-amino-acid chain; its full sequence is MRNGKILCCHCFYNKGDHEDDEGGRSIESLCAVNLAEGLNPRTNGPGKDSFSFSTSGSKPSSSLSFPVTSSMVSSTSSYSSFLFLLVVNHLFSGRLRCGSPEFIIRSFTITLGPLNHNISPFVFFHGNISSLPDLLVWLCRSVRCKTSTFLVIEIGKTNEEAASIIILPKLPLDACDVKSSIIVGIL.

The disordered stretch occupies residues 42 to 63; the sequence is RTNGPGKDSFSFSTSGSKPSSS. Low complexity predominate over residues 50 to 63; that stretch reads SFSFSTSGSKPSSS.

This is an uncharacterized protein from Saccharomyces cerevisiae (strain ATCC 204508 / S288c) (Baker's yeast).